A 675-amino-acid chain; its full sequence is PTS system glucose-specific EIICBA component (675 aa).

The region spanning 3–414 (KKLFGQLQRI…FNFKTPGRED (412 aa)) is the PTS EIIC type-1 domain. 11 consecutive transmembrane segments (helical) span residues 16 to 36 (LMLP…GTAF), 59 to 79 (MMTG…ALGV), 81 to 101 (IGLA…FIIM), 126 to 146 (VLGI…GALA), 173 to 193 (IMMA…WPFI), 199 to 219 (AFST…FGFI), 273 to 293 (FMQG…LAIY), 303 to 323 (VVGG…ITEP), 328 to 348 (FLFV…LSFL), 355 to 375 (LHLG…GILP), and 378 to 398 (TPWW…YVVF). Residues 425-506 (SKLPFDVLDA…ARIMNGDITK (82 aa)) enclose the PTS EIIB type-1 domain. Residue cysteine 447 is the Phosphocysteine intermediate; for EIIB activity of the active site. A PTS EIIA type-1 domain is found at 547-651 (DKVFSEKMMG…SVVTPVIITN (105 aa)). Catalysis depends on histidine 599, which acts as the Tele-phosphohistidine intermediate; for EIIA activity.

It is found in the cell membrane. The enzyme catalyses N(pros)-phospho-L-histidyl-[protein] + D-glucose(out) = D-glucose 6-phosphate(in) + L-histidyl-[protein]. In terms of biological role, the phosphoenolpyruvate-dependent sugar phosphotransferase system (sugar PTS), a major carbohydrate active transport system, catalyzes the phosphorylation of incoming sugar substrates concomitantly with their translocation across the cell membrane. This system is involved in glucose transport. The protein is PTS system glucose-specific EIICBA component (ptsG) of Staphylococcus haemolyticus (strain JCSC1435).